The sequence spans 131 residues: UPF0102 protein YraN (131 aa).

The span at 1-19 (MATVPTRSGSPRQLTTKQT) shows a compositional bias: polar residues. The tract at residues 1–20 (MATVPTRSGSPRQLTTKQTG) is disordered.

It belongs to the UPF0102 family.

The polypeptide is UPF0102 protein YraN (Escherichia coli O8 (strain IAI1)).